A 368-amino-acid polypeptide reads, in one-letter code: Anti-sigma-X factor RsiX (368 aa).

The span at 73–87 shows a compositional bias: polar residues; it reads QPQQKEASQENAVTK. The segment at 73–101 is disordered; that stretch reads QPQQKEASQENAVTKTETEDSPKAASSLD.

It localises to the cell membrane. Its function is as follows. The anti-sigma factor for extracytoplasmic function (ECF) sigma factor SigX, inhibits SigX activity and stabilizes it. The chain is Anti-sigma-X factor RsiX (rsiX) from Bacillus subtilis (strain 168).